Consider the following 225-residue polypeptide: Pyridoxine/pyridoxamine 5'-phosphate oxidase (225 aa).

Substrate contacts are provided by residues 21–24 and Lys79; that span reads RKSY. FMN contacts are provided by residues 74 to 79, 89 to 90, Arg95, and Lys96; these read RVVLIK and YT. Substrate contacts are provided by Tyr136, Arg140, and Ser144. FMN-binding positions include 153 to 154 and Trp197; that span reads QS. 203–205 contributes to the substrate binding site; the sequence is RLH. Arg207 contacts FMN.

It belongs to the pyridoxamine 5'-phosphate oxidase family. As to quaternary structure, homodimer. The cofactor is FMN.

The enzyme catalyses pyridoxamine 5'-phosphate + O2 + H2O = pyridoxal 5'-phosphate + H2O2 + NH4(+). The catalysed reaction is pyridoxine 5'-phosphate + O2 = pyridoxal 5'-phosphate + H2O2. It functions in the pathway cofactor metabolism; pyridoxal 5'-phosphate salvage; pyridoxal 5'-phosphate from pyridoxamine 5'-phosphate: step 1/1. It participates in cofactor metabolism; pyridoxal 5'-phosphate salvage; pyridoxal 5'-phosphate from pyridoxine 5'-phosphate: step 1/1. Functionally, catalyzes the oxidation of either pyridoxine 5'-phosphate (PNP) or pyridoxamine 5'-phosphate (PMP) into pyridoxal 5'-phosphate (PLP). The polypeptide is Pyridoxine/pyridoxamine 5'-phosphate oxidase (Paracidovorax citrulli (strain AAC00-1) (Acidovorax citrulli)).